We begin with the raw amino-acid sequence, 379 residues long: Homoserine O-succinyltransferase (379 aa).

Positions Asn51–Leu360 constitute an AB hydrolase-1 domain. Ser157 acts as the Nucleophile in catalysis. Arg227 is a substrate binding site. Residues Asp323 and His356 contribute to the active site. Asp357 is a substrate binding site.

The protein belongs to the AB hydrolase superfamily. MetX family. In terms of assembly, homodimer.

Its subcellular location is the cytoplasm. The enzyme catalyses L-homoserine + succinyl-CoA = O-succinyl-L-homoserine + CoA. It functions in the pathway amino-acid biosynthesis; L-methionine biosynthesis via de novo pathway; O-succinyl-L-homoserine from L-homoserine: step 1/1. Functionally, transfers a succinyl group from succinyl-CoA to L-homoserine, forming succinyl-L-homoserine. The protein is Homoserine O-succinyltransferase of Pseudomonas entomophila (strain L48).